We begin with the raw amino-acid sequence, 206 residues long: LexA repressor (206 aa).

The segment at residues 28 to 48 is a DNA-binding region (H-T-H motif); sequence VREIGQAVGLASSSTVHGHLS. Active-site for autocatalytic cleavage activity residues include serine 128 and lysine 166.

Belongs to the peptidase S24 family. In terms of assembly, homodimer.

The catalysed reaction is Hydrolysis of Ala-|-Gly bond in repressor LexA.. Its function is as follows. Represses a number of genes involved in the response to DNA damage (SOS response), including recA and lexA. In the presence of single-stranded DNA, RecA interacts with LexA causing an autocatalytic cleavage which disrupts the DNA-binding part of LexA, leading to derepression of the SOS regulon and eventually DNA repair. This is LexA repressor from Bacillus thuringiensis (strain Al Hakam).